Here is a 403-residue protein sequence, read N- to C-terminus: MQLKIYSSNKNYIQRGTKAFTEVTIAFFLAGFSTFSTLYCVQPILFLFSKEFSLNPAQSSLSLSASTAMMAFGMLFTGPLSDSIGRKVVMSSSLFLASFCTFCCSNMNSWESIIFMRALTGLALSGVAAVAMTYLSEEMHPSVLSFSIGLYISGNTIGGFLGRFLSSLFSEYFSWNIALEFISFLAFTSAVLFVYLLPKSKNFCSSPLDLRKILLYFIFQWRDPVLSKLFFMGCILMGSFITLFNYVGYRLISQPFFLGQTTIGLLSIIYLIGVYSSPQAGVLIERYRKGVILTLALTMMIFGVLITQCNIVLLIIVGLTLFAAGFFAAHSVTSTWISQCSKINKGSTSSIYLFSYYLGSSIFGTFSGIFWITEKWLGISIFIITFLCIGILLSIRLLQYKNI.

Transmembrane regions (helical) follow at residues 25–47 (IAFF…ILFL), 62–81 (SLSA…GPLS), 88–110 (VVMS…MNSW), 114–136 (IFMR…TYLS), 143–165 (VLSF…GRFL), 175–197 (WNIA…VYLL), 229–251 (LFFM…GYRL), 256–278 (FFLG…YSSP), 290–307 (GVIL…VLIT), 311–330 (IVLL…FAAH), 350–372 (SIYL…IFWI), and 376–398 (WLGI…IRLL).

This sequence belongs to the major facilitator superfamily.

It is found in the cell membrane. This is an uncharacterized protein from Buchnera aphidicola subsp. Baizongia pistaciae (strain Bp).